The following is a 214-amino-acid chain: Orotidine 5'-phosphate decarboxylase (214 aa).

Residues D11, K33, 59-68 (DFKIADIPNT), S114, 164-174 (PGIGSQGGRAS), G187, and R188 contribute to the substrate site. K61 serves as the catalytic Proton donor.

This sequence belongs to the OMP decarboxylase family. Type 1 subfamily. Homodimer.

The catalysed reaction is orotidine 5'-phosphate + H(+) = UMP + CO2. It participates in pyrimidine metabolism; UMP biosynthesis via de novo pathway; UMP from orotate: step 2/2. Its function is as follows. Catalyzes the decarboxylation of orotidine 5'-monophosphate (OMP) to uridine 5'-monophosphate (UMP). This chain is Orotidine 5'-phosphate decarboxylase, found in Thermoplasma acidophilum (strain ATCC 25905 / DSM 1728 / JCM 9062 / NBRC 15155 / AMRC-C165).